The primary structure comprises 190 residues: Isopentenyl-diphosphate Delta-isomerase (190 aa).

Mn(2+) is bound by residues His-27 and His-34. The region spanning 32–171 (PLHFAFSSYI…PFVFSPWMVD (140 aa)) is the Nudix hydrolase domain. The active site involves Cys-69. Mg(2+) is bound at residue Cys-69. Mn(2+) is bound at residue His-71. Glu-89 contacts Mg(2+). Residues Glu-119 and Glu-121 each coordinate Mn(2+). The active site involves Glu-121.

This sequence belongs to the IPP isomerase type 1 family. Requires Mg(2+) as cofactor. Mn(2+) is required as a cofactor.

The protein resides in the cytoplasm. The enzyme catalyses isopentenyl diphosphate = dimethylallyl diphosphate. The protein operates within isoprenoid biosynthesis; dimethylallyl diphosphate biosynthesis; dimethylallyl diphosphate from isopentenyl diphosphate: step 1/1. In terms of biological role, catalyzes the 1,3-allylic rearrangement of the homoallylic substrate isopentenyl (IPP) to its highly electrophilic allylic isomer, dimethylallyl diphosphate (DMAPP). The chain is Isopentenyl-diphosphate Delta-isomerase from Corynebacterium efficiens (strain DSM 44549 / YS-314 / AJ 12310 / JCM 11189 / NBRC 100395).